Consider the following 973-residue polypeptide: Vacuolar membrane protease (973 aa).

Residues 1–15 (MARQYSRTNPLGFTP) lie on the Cytoplasmic side of the membrane. The chain crosses the membrane as a helical span at residues 16 to 36 (WPVTIITALVYLALVIPLLVV). Residues 37–383 (QHVVPSAPGS…STLAVFELHT (347 aa)) are Vacuolar-facing. Asn52 and Asn115 each carry an N-linked (GlcNAc...) asparagine glycan. Residues His167 and Asp179 each coordinate Zn(2+). The active-site Proton acceptor is the Glu213. The Zn(2+) site is built by Glu214, Glu239, and His312. The chain crosses the membrane as a helical span at residues 384 to 404 (LFALSVTLLIVAPLVLLATSI). The Cytoplasmic segment spans residues 405–438 (ALVRADRMYLFRSTARVPGSDDFDEGVSLQGVRG). Residues 439-459 (FFRFPFLLVIPTGVAVGLAYL) form a helical membrane-spanning segment. The Vacuolar portion of the chain corresponds to 460–469 (VTKINPYIIH). A helical membrane pass occupies residues 470 to 490 (SSEYAVWSMMISAWVFLAWFV). At 491 to 504 (SRVADFARPSAFHR) the chain is on the cytoplasmic side. A helical membrane pass occupies residues 505-525 (VYVLTWMFVAEWVLLVIATVY). At 526 to 529 (ENRY) the chain is on the vacuolar side. A helical transmembrane segment spans residues 530 to 550 (GLAGGYFVFFALSGTFLATWI). The Cytoplasmic portion of the chain corresponds to 551–674 (SYLELFALPR…GLPKWTWVLQ (124 aa)). The interval 572–623 (SRYASNHGSRLGTSSGEHGMDDAEDEEDDDGDDEDEARNVEEEPTESTSLLR) is disordered. Residues 574 to 587 (YASNHGSRLGTSSG) are compositionally biased toward polar residues. A compositionally biased stretch (acidic residues) spans 593–607 (DAEDEEDDDGDDEDE). The chain crosses the membrane as a helical span at residues 675–695 (FLLSAPIVLILVGPLALLLTA). The Vacuolar portion of the chain corresponds to 696–708 (ALRQTAQDGSSPL). A helical transmembrane segment spans residues 709-729 (FVYIAIAVLTTLLVTPLLPFI). The Cytoplasmic portion of the chain corresponds to 730–735 (HRYTHH). A helical membrane pass occupies residues 736 to 756 (IPLFLLLVFTGTLIYNLVAFP). The Vacuolar portion of the chain corresponds to 757 to 973 (FSPSNRLKLF…LVEGSRRFEV (217 aa)). N-linked (GlcNAc...) asparagine glycans are attached at residues Asn803 and Asn839.

This sequence belongs to the peptidase M28 family. Zn(2+) is required as a cofactor.

Its subcellular location is the vacuole membrane. Functionally, may be involved in vacuolar sorting and osmoregulation. This is Vacuolar membrane protease from Aspergillus clavatus (strain ATCC 1007 / CBS 513.65 / DSM 816 / NCTC 3887 / NRRL 1 / QM 1276 / 107).